We begin with the raw amino-acid sequence, 140 residues long: Large ribosomal subunit protein uL13 (140 aa).

Belongs to the universal ribosomal protein uL13 family. In terms of assembly, part of the 50S ribosomal subunit.

In terms of biological role, this protein is one of the early assembly proteins of the 50S ribosomal subunit, although it is not seen to bind rRNA by itself. It is important during the early stages of 50S assembly. This chain is Large ribosomal subunit protein uL13, found in Nautilia profundicola (strain ATCC BAA-1463 / DSM 18972 / AmH).